The sequence spans 307 residues: 4-diphosphocytidyl-2-C-methyl-D-erythritol kinase (307 aa).

The active site involves lysine 9. 94-104 (PIGAGLAGGSS) lines the ATP pocket. The active site involves aspartate 136.

It belongs to the GHMP kinase family. IspE subfamily.

The catalysed reaction is 4-CDP-2-C-methyl-D-erythritol + ATP = 4-CDP-2-C-methyl-D-erythritol 2-phosphate + ADP + H(+). It participates in isoprenoid biosynthesis; isopentenyl diphosphate biosynthesis via DXP pathway; isopentenyl diphosphate from 1-deoxy-D-xylulose 5-phosphate: step 3/6. Its function is as follows. Catalyzes the phosphorylation of the position 2 hydroxy group of 4-diphosphocytidyl-2C-methyl-D-erythritol. The polypeptide is 4-diphosphocytidyl-2-C-methyl-D-erythritol kinase (Synechococcus sp. (strain CC9605)).